The chain runs to 492 residues: E3 ubiquitin-protein ligase TRIM35 (492 aa).

Met-1 is modified (N-acetylmethionine). Phosphoserine occurs at positions 4 and 8. The segment at 21 to 61 (CAVCYDPFRDAVTLRCGHNFCRGCVSRCWEVQVSPTCPVCK) adopts an RING-type zinc-finger fold. The B box-type zinc finger occupies 96–137 (RFSRVCRLHRGQLSLFCLEDKELLCCSCQADPRHQGHRVQPV). The Zn(2+) site is built by Cys-101, His-104, Cys-123, and His-129. Residues 210 to 249 (AEETRQKQLLADEKMKQLTEETEVLAHEIERLQMEMKEDD) adopt a coiled-coil conformation. The B30.2/SPRY domain occupies 283–486 (YLGSLQYRVW…LRICPLHISV (204 aa)).

Interacts with PKM isoform M2, but not isoform M1; this interaction may compete with that between PKM and FGFR1, and hence reduces FGFR1-dependent tyrosine phosphorylation of PKM. Interacts with IRF7; this interaction promotes IRF7 proteasomal degradation. Interacts with TRAF3; this interaction promotes TRAF3 activation.

Its subcellular location is the cytoplasm. The protein resides in the nucleus. The catalysed reaction is S-ubiquitinyl-[E2 ubiquitin-conjugating enzyme]-L-cysteine + [acceptor protein]-L-lysine = [E2 ubiquitin-conjugating enzyme]-L-cysteine + N(6)-ubiquitinyl-[acceptor protein]-L-lysine.. It functions in the pathway protein modification; protein ubiquitination. In terms of biological role, E3 ubiquitin-protein ligase that participates in multiple biological processes including cell death, glucose metabolism, and in particular, the innate immune response. Mediates 'Lys-63'-linked polyubiquitination of TRAF3 thereby promoting type I interferon production via RIG-I signaling pathway. Can also catalyze 'Lys-48'-linked polyubiquitination and proteasomal degradation of viral proteins such as influenza virus PB2. Acts as a negative feedback regulator of TLR7- and TLR9-triggered signaling. Mechanistically, promotes the 'Lys-48'-linked ubiquitination of IRF7 and induces its degradation via a proteasome-dependent pathway. Reduces FGFR1-dependent tyrosine phosphorylation of PKM, inhibiting PKM-dependent lactate production, glucose metabolism, and cell growth. This is E3 ubiquitin-protein ligase TRIM35 (TRIM35) from Pongo abelii (Sumatran orangutan).